Here is a 290-residue protein sequence, read N- to C-terminus: 4-hydroxy-3-methylbut-2-enyl diphosphate reductase (290 aa).

C13 serves as a coordination point for [4Fe-4S] cluster. (2E)-4-hydroxy-3-methylbut-2-enyl diphosphate contacts are provided by H41 and H75. Positions 41 and 75 each coordinate dimethylallyl diphosphate. H41 and H75 together coordinate isopentenyl diphosphate. C97 serves as a coordination point for [4Fe-4S] cluster. Residue H129 coordinates (2E)-4-hydroxy-3-methylbut-2-enyl diphosphate. H129 contributes to the dimethylallyl diphosphate binding site. H129 contributes to the isopentenyl diphosphate binding site. E131 serves as the catalytic Proton donor. Position 167 (T167) interacts with (2E)-4-hydroxy-3-methylbut-2-enyl diphosphate. C198 contacts [4Fe-4S] cluster. Positions 226, 227, 228, and 270 each coordinate (2E)-4-hydroxy-3-methylbut-2-enyl diphosphate. Dimethylallyl diphosphate is bound by residues S226, S227, N228, and S270. Isopentenyl diphosphate-binding residues include S226, S227, N228, and S270.

This sequence belongs to the IspH family. [4Fe-4S] cluster is required as a cofactor.

It catalyses the reaction isopentenyl diphosphate + 2 oxidized [2Fe-2S]-[ferredoxin] + H2O = (2E)-4-hydroxy-3-methylbut-2-enyl diphosphate + 2 reduced [2Fe-2S]-[ferredoxin] + 2 H(+). It carries out the reaction dimethylallyl diphosphate + 2 oxidized [2Fe-2S]-[ferredoxin] + H2O = (2E)-4-hydroxy-3-methylbut-2-enyl diphosphate + 2 reduced [2Fe-2S]-[ferredoxin] + 2 H(+). It functions in the pathway isoprenoid biosynthesis; dimethylallyl diphosphate biosynthesis; dimethylallyl diphosphate from (2E)-4-hydroxy-3-methylbutenyl diphosphate: step 1/1. The protein operates within isoprenoid biosynthesis; isopentenyl diphosphate biosynthesis via DXP pathway; isopentenyl diphosphate from 1-deoxy-D-xylulose 5-phosphate: step 6/6. Its function is as follows. Catalyzes the conversion of 1-hydroxy-2-methyl-2-(E)-butenyl 4-diphosphate (HMBPP) into a mixture of isopentenyl diphosphate (IPP) and dimethylallyl diphosphate (DMAPP). Acts in the terminal step of the DOXP/MEP pathway for isoprenoid precursor biosynthesis. This is 4-hydroxy-3-methylbut-2-enyl diphosphate reductase from Bacteroides fragilis (strain ATCC 25285 / DSM 2151 / CCUG 4856 / JCM 11019 / LMG 10263 / NCTC 9343 / Onslow / VPI 2553 / EN-2).